Consider the following 118-residue polypeptide: UPF0344 protein Aflv_2205 (118 aa).

4 consecutive transmembrane segments (helical) span residues 4 to 24 (AHIT…ALQA), 32 to 52 (MLHM…AWIL), 60 to 80 (FLYI…EMIL), and 96 to 116 (FIVA…GFSF).

Belongs to the UPF0344 family.

It localises to the cell membrane. This Anoxybacillus flavithermus (strain DSM 21510 / WK1) protein is UPF0344 protein Aflv_2205.